Reading from the N-terminus, the 866-residue chain is DNA mismatch repair protein MutS (866 aa).

An ATP-binding site is contributed by 618-625 (GPNMSGKS).

This sequence belongs to the DNA mismatch repair MutS family.

In terms of biological role, this protein is involved in the repair of mismatches in DNA. It is possible that it carries out the mismatch recognition step. This protein has a weak ATPase activity. The polypeptide is DNA mismatch repair protein MutS (Flavobacterium psychrophilum (strain ATCC 49511 / DSM 21280 / CIP 103535 / JIP02/86)).